The following is a 773-amino-acid chain: 3-isopropylmalate dehydratase (773 aa).

Positions 355, 415, and 418 each coordinate [4Fe-4S] cluster.

Belongs to the aconitase/IPM isomerase family. As to quaternary structure, monomer. The cofactor is [4Fe-4S] cluster.

The enzyme catalyses (2R,3S)-3-isopropylmalate = (2S)-2-isopropylmalate. Its pathway is amino-acid biosynthesis; L-leucine biosynthesis; L-leucine from 3-methyl-2-oxobutanoate: step 2/4. Its function is as follows. Catalyzes the isomerization between 2-isopropylmalate and 3-isopropylmalate, via the formation of 2-isopropylmaleate. This Mycosarcoma maydis (Corn smut fungus) protein is 3-isopropylmalate dehydratase (LEU1).